A 265-amino-acid polypeptide reads, in one-letter code: Deoxycytidine kinase 1 (265 aa).

Position 30–38 (30–38 (GNIAAGKST)) interacts with ATP. Substrate-binding residues include Glu55, Tyr88, and Gln99. Glu129 serves as the catalytic Proton acceptor. Substrate contacts are provided by Arg130 and Asp135. 190 to 194 (RVYTR) contacts ATP. Glu199 serves as a coordination point for substrate. 242–244 (EDF) provides a ligand contact to ATP.

The protein belongs to the DCK/DGK family. In terms of assembly, homodimer.

It is found in the nucleus. The catalysed reaction is 2'-deoxycytidine + a ribonucleoside 5'-triphosphate = dCMP + a ribonucleoside 5'-diphosphate + H(+). The enzyme catalyses 2'-deoxyguanosine + ATP = dGMP + ADP + H(+). It catalyses the reaction 2'-deoxyadenosine + ATP = dAMP + ADP + H(+). Its function is as follows. Phosphorylates the deoxyribonucleosides deoxyadenosine, deoxycytidine and deoxyguanosine with highest activity against deoxycytidine followed by deadenosine and deoxyguanosine. Shows only very minor activity against deoxyuridine and deoxythymidine. In Xenopus laevis (African clawed frog), this protein is Deoxycytidine kinase 1.